The primary structure comprises 211 residues: Claudin-1 (211 aa).

The Cytoplasmic portion of the chain corresponds to 1-7 (MANAGLQ). Residues 8–28 (LLGFILASLGWIGSIVSTALP) traverse the membrane as a helical segment. Residues 29–81 (QWKIYSYAGDNIVTAQAIYEGLWMSCVSQSTGQIQCKVFDSLLNLNSTLQATR) are Extracellular-facing. C54 and C64 are oxidised to a cystine. Residues 82–102 (ALMVIGILLGLIAIFVSTIGM) traverse the membrane as a helical segment. Residues 103 to 115 (KCMRCLEDDEVQK) lie on the Cytoplasmic side of the membrane. A helical transmembrane segment spans residues 116 to 136 (MWMAVIGGIIFVISGLATLVA). The Extracellular segment spans residues 137-163 (TAWYGNRIVQEFYDPMTPVNARYEFGQ). The helical transmembrane segment at 164 to 184 (ALFTGWAAASLCLLGGALLSC) threads the bilayer. The Cytoplasmic segment spans residues 185 to 211 (SCPRKTTSYPTPRPYPKPTPSSGKDYV). The disordered stretch occupies residues 190–211 (TTSYPTPRPYPKPTPSSGKDYV). Residues 210–211 (YV) are interactions with TJP1, TJP2, TJP3 and PATJ.

Belongs to the claudin family. Can form homo- and heteropolymers with other CLDN. Homopolymers interact with CLDN3, but not CLDN2, homopolymers. Directly interacts with TJP1/ZO-1, TJP2/ZO-2 and TJP3/ZO-3. Interacts with MPDZ and PATJ. Interacts with OCLN, CD81, CLDN4, CLDN6 and CLDN9. As to expression, detected in epididymis (at protein level). Detected in testis and epididymis.

It localises to the cell junction. It is found in the tight junction. Its subcellular location is the cell membrane. The protein resides in the basolateral cell membrane. In terms of biological role, claudins function as major constituents of the tight junction complexes that regulate the permeability of epithelia. While some claudin family members play essential roles in the formation of impermeable barriers, others mediate the permeability to ions and small molecules. Often, several claudin family members are coexpressed and interact with each other, and this determines the overall permeability. CLDN1 is required to prevent the paracellular diffusion of small molecules through tight junctions in the epidermis and is required for the normal barrier function of the skin. Required for normal water homeostasis and to prevent excessive water loss through the skin, probably via an indirect effect on the expression levels of other proteins, since CLDN1 itself seems to be dispensable for water barrier formation in keratinocyte tight junctions. This is Claudin-1 (Cldn1) from Rattus norvegicus (Rat).